A 109-amino-acid polypeptide reads, in one-letter code: Iron-sulfur cluster assembly protein CyaY (109 aa).

The protein belongs to the frataxin family.

Functionally, involved in iron-sulfur (Fe-S) cluster assembly. May act as a regulator of Fe-S biogenesis. The chain is Iron-sulfur cluster assembly protein CyaY from Bordetella pertussis (strain Tohama I / ATCC BAA-589 / NCTC 13251).